Here is a 189-residue protein sequence, read N- to C-terminus: MSDQQHSAPQNAAATASPSDSPEAVEATMAAHAADELGRLQNELAELKAKSADLADQFLRAKAEAENARRRADEEVSKARKFGIESFAESLLPVADSLTAALAIKDATIEQLREGTDATLRQLTSALERNKVLAIQPGAGEKFDPHQHQAISMVPAEQEPNTIVSVLQKGYVIADRVLRPALVTVAAPK.

Residues 1–20 (MSDQQHSAPQNAAATASPSD) show a composition bias toward polar residues. A disordered region spans residues 1 to 29 (MSDQQHSAPQNAAATASPSDSPEAVEATM).

It belongs to the GrpE family. Homodimer.

It is found in the cytoplasm. Its function is as follows. Participates actively in the response to hyperosmotic and heat shock by preventing the aggregation of stress-denatured proteins, in association with DnaK and GrpE. It is the nucleotide exchange factor for DnaK and may function as a thermosensor. Unfolded proteins bind initially to DnaJ; upon interaction with the DnaJ-bound protein, DnaK hydrolyzes its bound ATP, resulting in the formation of a stable complex. GrpE releases ADP from DnaK; ATP binding to DnaK triggers the release of the substrate protein, thus completing the reaction cycle. Several rounds of ATP-dependent interactions between DnaJ, DnaK and GrpE are required for fully efficient folding. The polypeptide is Protein GrpE (Paracidovorax citrulli (strain AAC00-1) (Acidovorax citrulli)).